The sequence spans 116 residues: uncharacterized protein (116 aa).

The signal sequence occupies residues 1–21 (MAPSTAMLIMGLLKLPRLRLA).

This is an uncharacterized protein from Saccharomyces cerevisiae (strain ATCC 204508 / S288c) (Baker's yeast).